The following is a 725-amino-acid chain: Golgin candidate 4 (725 aa).

A disordered region spans residues 17 to 62 (HDVHDDDEDDDEDLTIYGSTNGGTDRRNSNGFRYSRSPMANGFESP). Residues 21 to 30 (DDDEDDDEDL) are compositionally biased toward acidic residues. Residues 66–132 (EIERYKAEIN…LKESRLDLSR (67 aa)) adopt a coiled-coil conformation. 3 disordered regions span residues 134-183 (SNNN…SHKK), 191-210 (LEERTRSMASAQARELEKER), and 311-349 (ASQKSTSRKLFPKSTEDLSRHLSSLDEEKAGTFPGKEDM). Over residues 148–175 (NRSQRSPTNWKNRNQMNNGIASKPNGTE) the composition is skewed to polar residues. Coiled-coil stretches lie at residues 191–316 (LEER…QKST), 344–407 (PGKE…QTNE), and 437–563 (EIRK…LNRM). Residues 324-349 (STEDLSRHLSSLDEEKAGTFPGKEDM) show a composition bias toward basic and acidic residues. One can recognise a GRIP domain in the interval 562 to 613 (RMSMDSDFLVDRRIVIKLLVTYFQRNHSREVLDLMVRMLGFSEEEKQRIGLA). The span at 672 to 688 (ERERREAEDAANKEQEK) shows a compositional bias: basic and acidic residues. Residues 672-725 (ERERREAEDAANKEQEKATVSSTQRPKYEQSDSEFSTVPLTSSNSNHRLSRLLT) are disordered. Positions 711 to 725 (LTSSNSNHRLSRLLT) are enriched in low complexity.

It localises to the golgi apparatus. Golgi matrix protein playing a role in tethering of vesicles to Golgi membranes and in maintaining the overall structure of the Golgi apparatus. The polypeptide is Golgin candidate 4 (GC4) (Arabidopsis thaliana (Mouse-ear cress)).